The chain runs to 420 residues: DNA repair protein RadA (420 aa).

62–69 contributes to the ATP binding site; the sequence is GDPGIGKS. Positions 218 to 222 match the RadA KNRFG motif motif; sequence KNRFG. Positions 317 to 420 are lon-protease-like; that stretch reads DAYLKSAGGV…IQEVLKKVFA (104 aa).

The protein belongs to the RecA family. RadA subfamily.

Plays a role in repairing double-strand DNA breaks, probably involving stabilizing or processing branched DNA or blocked replication forks. Required for efficient transformation with chromosomal (linear) DNA, but not for replicative plasmid DNA. Its increased sensitivity to a DNA damaging agent suggests it may be required for DNA repair. This chain is DNA repair protein RadA, found in Streptococcus pneumoniae (strain ATCC BAA-255 / R6).